The following is a 60-amino-acid chain: Large ribosomal subunit protein uL30 (60 aa).

It belongs to the universal ribosomal protein uL30 family. In terms of assembly, part of the 50S ribosomal subunit.

This chain is Large ribosomal subunit protein uL30, found in Streptococcus suis (strain 98HAH33).